Here is a 521-residue protein sequence, read N- to C-terminus: Protein nucleotidyltransferase YdiU (521 aa).

ATP is bound by residues Gly-109, Gly-111, Arg-112, Lys-131, Asp-143, Gly-144, Arg-194, and Arg-201. Asp-270 acts as the Proton acceptor in catalysis. Positions 271 and 280 each coordinate Mg(2+). Asp-280 serves as a coordination point for ATP.

Belongs to the SELO family. Requires Mg(2+) as cofactor. Mn(2+) serves as cofactor.

The enzyme catalyses L-seryl-[protein] + ATP = 3-O-(5'-adenylyl)-L-seryl-[protein] + diphosphate. The catalysed reaction is L-threonyl-[protein] + ATP = 3-O-(5'-adenylyl)-L-threonyl-[protein] + diphosphate. It catalyses the reaction L-tyrosyl-[protein] + ATP = O-(5'-adenylyl)-L-tyrosyl-[protein] + diphosphate. It carries out the reaction L-histidyl-[protein] + UTP = N(tele)-(5'-uridylyl)-L-histidyl-[protein] + diphosphate. The enzyme catalyses L-seryl-[protein] + UTP = O-(5'-uridylyl)-L-seryl-[protein] + diphosphate. The catalysed reaction is L-tyrosyl-[protein] + UTP = O-(5'-uridylyl)-L-tyrosyl-[protein] + diphosphate. Its function is as follows. Nucleotidyltransferase involved in the post-translational modification of proteins. It can catalyze the addition of adenosine monophosphate (AMP) or uridine monophosphate (UMP) to a protein, resulting in modifications known as AMPylation and UMPylation. The polypeptide is Protein nucleotidyltransferase YdiU (Burkholderia mallei (strain ATCC 23344)).